Reading from the N-terminus, the 577-residue chain is Arginine--tRNA ligase (577 aa).

The short motif at 122–132 (PNVAKEMHVGH) is the 'HIGH' region element.

It belongs to the class-I aminoacyl-tRNA synthetase family. As to quaternary structure, monomer.

The protein resides in the cytoplasm. The enzyme catalyses tRNA(Arg) + L-arginine + ATP = L-arginyl-tRNA(Arg) + AMP + diphosphate. The chain is Arginine--tRNA ligase from Escherichia coli O127:H6 (strain E2348/69 / EPEC).